A 482-amino-acid polypeptide reads, in one-letter code: tRNA sulfurtransferase (482 aa).

The 105-residue stretch at 61-165 (SAIRDALTRI…QDRLLLIKGR (105 aa)) folds into the THUMP domain. ATP contacts are provided by residues 183-184 (LI), K265, G287, and Q296. A disulfide bridge connects residues C344 and C456. In terms of domain architecture, Rhodanese spans 404–482 (FAPTDVLLDI…GFSNVKVYRP (79 aa)). C456 acts as the Cysteine persulfide intermediate in catalysis.

It belongs to the ThiI family.

The protein localises to the cytoplasm. It carries out the reaction [ThiI sulfur-carrier protein]-S-sulfanyl-L-cysteine + a uridine in tRNA + 2 reduced [2Fe-2S]-[ferredoxin] + ATP + H(+) = [ThiI sulfur-carrier protein]-L-cysteine + a 4-thiouridine in tRNA + 2 oxidized [2Fe-2S]-[ferredoxin] + AMP + diphosphate. The enzyme catalyses [ThiS sulfur-carrier protein]-C-terminal Gly-Gly-AMP + S-sulfanyl-L-cysteinyl-[cysteine desulfurase] + AH2 = [ThiS sulfur-carrier protein]-C-terminal-Gly-aminoethanethioate + L-cysteinyl-[cysteine desulfurase] + A + AMP + 2 H(+). It functions in the pathway cofactor biosynthesis; thiamine diphosphate biosynthesis. Its function is as follows. Catalyzes the ATP-dependent transfer of a sulfur to tRNA to produce 4-thiouridine in position 8 of tRNAs, which functions as a near-UV photosensor. Also catalyzes the transfer of sulfur to the sulfur carrier protein ThiS, forming ThiS-thiocarboxylate. This is a step in the synthesis of thiazole, in the thiamine biosynthesis pathway. The sulfur is donated as persulfide by IscS. In Pectobacterium carotovorum subsp. carotovorum (strain PC1), this protein is tRNA sulfurtransferase.